Consider the following 612-residue polypeptide: MPAYRSRTTTHGRNMAGARGLWRATGVKNSDFGKPIIAIVNSFTQFVPGHVHLKDLGQMVAREVEAAGGIAKEFNTIAVDDGIAMGHDGMLYSLPSRELIADSVEYMVNAHCADAMVCISNCDKITPGMLMAAMRLNIPAIFVSGGPMEAGKVTLGDGRKVSLDLVDAMVAAADDKISDADLAAIEEAACPTCGSCSGMFTANSMNCLSEALGLSLPGNGSTLATHAFRKNLFLEAGRRIVEVTRRHYEQDDASVLPRAIASKAAFLNAMSLDIAMGGSTNTVLHLLAIAQEGGVDFTMDDIDALSRKVPCLCKVAPNTANVHMEDVHRAGGIMAILGELDRAGLIDRDCPTVHAPTIGAAIDQWDIARSNDPQARELFLAAPGGVPTQVAFSQATLWPDLDLDREHGVIRSAKAPFSKDGGLAVLKGNVALDGCIVKTAGVDESILVFSGRAKVYESQDAAVSGILTGKVEAGDVVVIRYEGPKGGPGMQEMLYPTSYLKSKGLGKACALITDGRFSGGTSGLSIGHVSPEAAAGGTIGLVRDGDRIEIDIPNRSIRLAVPEDELAARRAEQDAKGWKPAQPRQRQVSAALKVYAQFAASADKGAVRILPE.

Aspartate 81 contributes to the Mg(2+) binding site. Residue cysteine 122 coordinates [2Fe-2S] cluster. Mg(2+) is bound by residues aspartate 123 and lysine 124. Lysine 124 is subject to N6-carboxylysine. Cysteine 196 serves as a coordination point for [2Fe-2S] cluster. Glutamate 492 is a Mg(2+) binding site. The active-site Proton acceptor is the serine 518.

The protein belongs to the IlvD/Edd family. Homodimer. [2Fe-2S] cluster serves as cofactor. It depends on Mg(2+) as a cofactor.

The catalysed reaction is (2R)-2,3-dihydroxy-3-methylbutanoate = 3-methyl-2-oxobutanoate + H2O. It catalyses the reaction (2R,3R)-2,3-dihydroxy-3-methylpentanoate = (S)-3-methyl-2-oxopentanoate + H2O. It participates in amino-acid biosynthesis; L-isoleucine biosynthesis; L-isoleucine from 2-oxobutanoate: step 3/4. It functions in the pathway amino-acid biosynthesis; L-valine biosynthesis; L-valine from pyruvate: step 3/4. Functions in the biosynthesis of branched-chain amino acids. Catalyzes the dehydration of (2R,3R)-2,3-dihydroxy-3-methylpentanoate (2,3-dihydroxy-3-methylvalerate) into 2-oxo-3-methylpentanoate (2-oxo-3-methylvalerate) and of (2R)-2,3-dihydroxy-3-methylbutanoate (2,3-dihydroxyisovalerate) into 2-oxo-3-methylbutanoate (2-oxoisovalerate), the penultimate precursor to L-isoleucine and L-valine, respectively. This chain is Dihydroxy-acid dehydratase, found in Paracoccus denitrificans (strain Pd 1222).